A 326-amino-acid polypeptide reads, in one-letter code: Guanine nucleotide-binding protein subunit beta-like protein 1 (326 aa).

WD repeat units lie at residues 17–61 (GTQS…IVTT), 64–104 (GHGG…NTIM), 159–202 (ARPG…VCSQ), 205–244 (CHEE…SLQV), 250–291 (LTNP…AVLA), and 292–325 (FHSA…LYPC).

Expressed at low levels in most tissues and highly expressed in adult testis. Widely expressed in adult brain with striking regional distribution in forebrain, midbrain, and hindbrain structures, including the thalamus, hypothalamus, amygdala, hippocampus, pons.

The protein resides in the cytoplasm. It localises to the nucleus. Acts as a critical regulator of DNA damage response (DDR) signaling via specifically regulating phosphatidylinositol 3-kinase-related protein kinase (PIKK) family proteins. The chain is Guanine nucleotide-binding protein subunit beta-like protein 1 (Gnb1l) from Mus musculus (Mouse).